The following is a 325-amino-acid chain: GPI-linked NAD(P)(+)--arginine ADP-ribosyltransferase 1 (325 aa).

Positions 1–22 (MKIPAMMSLLLVSVGLRDGVQV) are cleaved as a signal peptide. Intrachain disulfides connect Cys-53/Cys-272 and Cys-169/Cys-219. N-linked (GlcNAc...) asparagine glycosylation occurs at Asn-65. The region spanning 73-268 (KVYADGWAQA…IYLRALGKRS (196 aa)) is the TR mART core domain. NAD(+)-binding residues include Tyr-117 and Arg-174. Active-site residues include Arg-174 and Ser-197. Residue Ser-228 participates in NAD(+) binding. Glu-235 is a catalytic residue. Asn-248 carries an N-linked (GlcNAc...) asparagine glycan. Ser-290 carries the GPI-anchor amidated serine lipid modification. Positions 291–325 (APGSISASCSLLLLLLFLVLSALPENPGLQQLTRC) are cleaved as a propeptide — removed in mature form.

This sequence belongs to the Arg-specific ADP-ribosyltransferase family. Abundantly expressed in cardiac and skeletal muscle. Low levels also found in lung.

The protein localises to the sarcoplasmic reticulum membrane. It carries out the reaction L-arginyl-[protein] + NAD(+) = N(omega)-(ADP-D-ribosyl)-L-arginyl-[protein] + nicotinamide + H(+). In terms of biological role, has ADP-ribosyltransferase activity toward GLP1R. In Mus musculus (Mouse), this protein is GPI-linked NAD(P)(+)--arginine ADP-ribosyltransferase 1 (Art1).